The sequence spans 204 residues: N-(5'-phosphoribosyl)anthranilate isomerase (204 aa).

This sequence belongs to the TrpF family.

It catalyses the reaction N-(5-phospho-beta-D-ribosyl)anthranilate = 1-(2-carboxyphenylamino)-1-deoxy-D-ribulose 5-phosphate. It participates in amino-acid biosynthesis; L-tryptophan biosynthesis; L-tryptophan from chorismate: step 3/5. This Desulforudis audaxviator (strain MP104C) protein is N-(5'-phosphoribosyl)anthranilate isomerase.